Reading from the N-terminus, the 124-residue chain is Transmembrane protein 141 (124 aa).

2 consecutive transmembrane segments (helical) span residues 29-48 and 60-78; these read YAFM…IFFG and LQWN…SYSV. The interval 97–124 is disordered; that stretch reads NIPDRNSDKEEPETSADSTTTQHEDVLE.

The protein belongs to the TMEM141 family.

It is found in the membrane. The chain is Transmembrane protein 141 (tmem141) from Danio rerio (Zebrafish).